We begin with the raw amino-acid sequence, 608 residues long: Amino-acid acetyltransferase, mitochondrial (608 aa).

The N-acetyltransferase domain occupies L402–L604.

It belongs to the acetyltransferase family.

It is found in the mitochondrion. It catalyses the reaction L-glutamate + acetyl-CoA = N-acetyl-L-glutamate + CoA + H(+). Its pathway is amino-acid biosynthesis; L-arginine biosynthesis; N(2)-acetyl-L-ornithine from L-glutamate: step 1/4. In terms of biological role, N-acetylglutamate synthase involved in arginine biosynthesis. The protein is Amino-acid acetyltransferase, mitochondrial (ARG2) of Yarrowia lipolytica (strain CLIB 122 / E 150) (Yeast).